The chain runs to 406 residues: Putative 12-oxophytodienoate reductase 12 (406 aa).

FMN is bound by residues 41–43 (PLT), Ala-74, and Gln-119. Position 188 to 191 (188 to 191 (HAAN)) interacts with substrate. Residues Arg-240, Gly-317, and 338 to 339 (GR) contribute to the FMN site.

The protein belongs to the NADH:flavin oxidoreductase/NADH oxidase family. Requires FMN as cofactor.

Putative oxophytodienoate reductase that may be involved in the biosynthesis or metabolism of oxylipin signaling molecules. This Oryza sativa subsp. japonica (Rice) protein is Putative 12-oxophytodienoate reductase 12 (OPR12).